The chain runs to 138 residues: MRTLWIVAVCLIGVEGNLFQFGEMILEKTGKEVVHSYAIYGCYCGWGGQGRAQDATDRCCFVHDCCYGTVNDCNPKTATYSYSFENGDIVCGDNDLCLRTVCECDRAAAICLGQNVNTYDKNYEYYSISHCTEESEQC.

A signal peptide spans 1-16; that stretch reads MRTLWIVAVCLIGVEG. 7 disulfides stabilise this stretch: Cys42/Cys131, Cys44/Cys60, Cys59/Cys111, Cys65/Cys138, Cys66/Cys104, Cys73/Cys97, and Cys91/Cys102. Residues Tyr43, Gly45, and Gly47 each contribute to the Ca(2+) site. The active site involves His63. Asp64 serves as a coordination point for Ca(2+). Asp105 is an active-site residue.

It belongs to the phospholipase A2 family. Group II subfamily. D49 sub-subfamily. As to quaternary structure, heterodimer of a weakly toxic basic protein having phospholipase A2 activity (RV-4) and a non-toxic acidic protein which inhibits its enzymatic activity but potentiates its lethal potency and neurotoxicity (RV-7). Ca(2+) is required as a cofactor. Expressed by the venom gland.

The protein resides in the secreted. The enzyme catalyses a 1,2-diacyl-sn-glycero-3-phosphocholine + H2O = a 1-acyl-sn-glycero-3-phosphocholine + a fatty acid + H(+). Its function is as follows. Heterodimer: RV-4/RV-7 targets the presynaptic sites of the neuromuscular junction. In terms of biological role, monomer: snake venom phospholipase A2 (PLA2) RV-7 that has low enzymatic activity and is not toxic. It inhibits the enzymatic activity of RV-4 in vitro but potentiates its lethal potency and neurotoxicity. It may facilitate the specific binding of RV-4 to its presynaptic binding sites, probably by acting as a chaperone, minimizing distraction and destruction of RV-4 en route to the site of action by reducing non-specific binding to muscle and other organs. PLA2 catalyzes the calcium-dependent hydrolysis of the 2-acyl groups in 3-sn-phosphoglycerides. The sequence is that of Acidic phospholipase A2 RV-7 from Daboia siamensis (Eastern Russel's viper).